A 326-amino-acid polypeptide reads, in one-letter code: MAEVLLFEALRDALDEEMQRDPSVLVMGEDVGHYGGSYKVTKGFHEKYGDLRLLDTPIAENSFTGMAIGAAMTGLRPIVEGMNMGFLLLAFNQIANNAGMLHYTSGGNFKIPIVIRGPGGVGRQLGAEHSQRLESYFQSVPGLQMVACSTPYNGKGLLKSAIRNDNPVIFFEHVLLYNLNENLIEQEYLLCLEKAEVVRPGNDITILTYSRMRHHVLQAAKVLVNKGYDPEIIDILSLKPLDMGTISLSVRKTHKVLIVEECMRTGGIGASLRAAILEDLFDYLDAPIQCLSSQDVPTPYSGPLEELTVIQPNQIIQAVEEMCKIE.

Glu60 contributes to the thiamine diphosphate binding site. Residues Ile113, Ala161, Ile162, and Asn166 each coordinate K(+).

In terms of assembly, heterodimer of an alpha and a beta chain. Thiamine diphosphate serves as cofactor.

The protein resides in the plastid. It is found in the chloroplast. It carries out the reaction N(6)-[(R)-lipoyl]-L-lysyl-[protein] + pyruvate + H(+) = N(6)-[(R)-S(8)-acetyldihydrolipoyl]-L-lysyl-[protein] + CO2. The pyruvate dehydrogenase complex catalyzes the overall conversion of pyruvate to acetyl-CoA and CO(2). It contains multiple copies of three enzymatic components: pyruvate dehydrogenase (E1), dihydrolipoamide acetyltransferase (E2) and lipoamide dehydrogenase (E3). The polypeptide is Pyruvate dehydrogenase E1 component subunit beta (pdhB) (Chaetosphaeridium globosum (Charophycean green alga)).